The following is a 169-amino-acid chain: Ribosome maturation factor RimM (169 aa).

A PRC barrel domain is found at 94 to 167 (ENEFYFHEII…KITIEVMEGL (74 aa)).

The protein belongs to the RimM family. Binds ribosomal protein uS19.

It is found in the cytoplasm. An accessory protein needed during the final step in the assembly of 30S ribosomal subunit, possibly for assembly of the head region. Essential for efficient processing of 16S rRNA. May be needed both before and after RbfA during the maturation of 16S rRNA. It has affinity for free ribosomal 30S subunits but not for 70S ribosomes. The chain is Ribosome maturation factor RimM from Listeria monocytogenes serotype 4b (strain F2365).